A 164-amino-acid chain; its full sequence is Crossover junction endodeoxyribonuclease RuvC (164 aa).

Catalysis depends on residues Asp-7, Glu-67, and Asp-140. 3 residues coordinate Mg(2+): Asp-7, Glu-67, and Asp-140.

Belongs to the RuvC family. Homodimer which binds Holliday junction (HJ) DNA. The HJ becomes 2-fold symmetrical on binding to RuvC with unstacked arms; it has a different conformation from HJ DNA in complex with RuvA. In the full resolvosome a probable DNA-RuvA(4)-RuvB(12)-RuvC(2) complex forms which resolves the HJ. Requires Mg(2+) as cofactor.

Its subcellular location is the cytoplasm. The enzyme catalyses Endonucleolytic cleavage at a junction such as a reciprocal single-stranded crossover between two homologous DNA duplexes (Holliday junction).. In terms of biological role, the RuvA-RuvB-RuvC complex processes Holliday junction (HJ) DNA during genetic recombination and DNA repair. Endonuclease that resolves HJ intermediates. Cleaves cruciform DNA by making single-stranded nicks across the HJ at symmetrical positions within the homologous arms, yielding a 5'-phosphate and a 3'-hydroxyl group; requires a central core of homology in the junction. The consensus cleavage sequence is 5'-(A/T)TT(C/G)-3'. Cleavage occurs on the 3'-side of the TT dinucleotide at the point of strand exchange. HJ branch migration catalyzed by RuvA-RuvB allows RuvC to scan DNA until it finds its consensus sequence, where it cleaves and resolves the cruciform DNA. The chain is Crossover junction endodeoxyribonuclease RuvC from Chloroflexus aurantiacus (strain ATCC 29364 / DSM 637 / Y-400-fl).